A 485-amino-acid chain; its full sequence is GTPase Der (485 aa).

EngA-type G domains are found at residues Pro-3–Glu-167 and Pro-176–Met-349. GTP contacts are provided by residues Gly-9–Ser-16, Asp-56–Phe-60, Asn-119–Glu-122, Gly-182–Ser-189, Asp-229–Val-233, and Asn-294–Asp-297. The 85-residue stretch at Ile-350–Glu-434 folds into the KH-like domain. A disordered region spans residues Asn-435 to Lys-485. Basic and acidic residues predominate over residues Arg-457 to Asn-469. The segment covering Arg-470–Lys-485 has biased composition (basic residues).

The protein belongs to the TRAFAC class TrmE-Era-EngA-EngB-Septin-like GTPase superfamily. EngA (Der) GTPase family. In terms of assembly, associates with the 50S ribosomal subunit.

Its function is as follows. GTPase that plays an essential role in the late steps of ribosome biogenesis. The polypeptide is GTPase Der (Neisseria meningitidis serogroup C / serotype 2a (strain ATCC 700532 / DSM 15464 / FAM18)).